Here is a 470-residue protein sequence, read N- to C-terminus: Monocarboxylate transporter 4 (470 aa).

Residues 1–17 (MGGAVVDEGPTGIKAPD) are Cytoplasmic-facing. A helical membrane pass occupies residues 18-38 (GGWGWAVLFGCFIITGFSYAF). Residues 39–61 (PKAVSVFFKELMHEFGIGYSDTA) lie on the Extracellular side of the membrane. The helical transmembrane segment at 62–82 (WISSILLAMLYGTGPLCSVCV) threads the bilayer. The Cytoplasmic segment spans residues 83-84 (NR). The chain crosses the membrane as a helical span at residues 85-105 (FGCRPVMLVGGLFASLGMVAA). Topologically, residues 106–109 (SFCR) are extracellular. A helical membrane pass occupies residues 110–130 (SIIQIYLTTGVITGLGLALNF). Topologically, residues 131 to 149 (QPSLIMLNRYFNKRRPIAN) are cytoplasmic. A helical transmembrane segment spans residues 150 to 170 (GLAAAGSPVFLCALSPLGQLL). The Extracellular portion of the chain corresponds to 171-179 (QDHYGWRGG). A helical membrane pass occupies residues 180-200 (FLILGGLLLNCCVCAALMRPL). At 201-231 (VAPQVGGGTEPRGPQRPPQRLLDLSVFRDRG) the chain is on the cytoplasmic side. A helical transmembrane segment spans residues 232–252 (FLIYAVAASIMVLGLFVPPVF). The Extracellular segment spans residues 253-267 (VVSYAKDMGVPDTKA). A helical transmembrane segment spans residues 268 to 288 (AFLLTILGFIDIFARPTAGFI). Residues 289-298 (TGLKKVRPYS) lie on the Cytoplasmic side of the membrane. A helical membrane pass occupies residues 299 to 319 (VYLFSFAMFFNGFTDLTGSTA). Residues 320–321 (TD) are Extracellular-facing. Residues 322-342 (YGGLVVFCIFFGISYGMVGAL) form a helical membrane-spanning segment. Over 343 to 355 (QFEVLMAIVGTQK) the chain is Cytoplasmic. The helical transmembrane segment at 356 to 376 (FSSAIGLVLLLEAVAVLIGPP) threads the bilayer. Residues 377–391 (SGGKLLDATKVYKYV) lie on the Extracellular side of the membrane. A helical transmembrane segment spans residues 392–412 (FILAGAEVLTSSLVLLLGNFF). The Cytoplasmic portion of the chain corresponds to 413 to 470 (CIGKRKRPEVTEPEEVASEEKLHKPPVDVGVDSREVEHFLKAEPEKNGEVVHTPETSV). Basolateral sorting signal stretches follow at residues 429 to 446 (ASEE…VDSR) and 446 to 470 (REVE…ETSV). Residue serine 430 is modified to Phosphoserine. Threonine 465 bears the Phosphothreonine mark. A Phosphoserine modification is found at serine 469.

Belongs to the major facilitator superfamily. Monocarboxylate porter (TC 2.A.1.13) family. As to quaternary structure, interacts with BSG; interaction mediates SLC16A3 targeting to the plasma membrane.

The protein localises to the cell membrane. The protein resides in the basolateral cell membrane. The catalysed reaction is (S)-lactate(in) + H(+)(in) = (S)-lactate(out) + H(+)(out). It catalyses the reaction pyruvate(out) + H(+)(out) = pyruvate(in) + H(+)(in). Functionally, proton-dependent transporter of monocarboxylates such as L-lactate and pyruvate. Plays a predominant role in the L-lactate efflux from highly glycolytic cells. The polypeptide is Monocarboxylate transporter 4 (Slc16a3) (Mus musculus (Mouse)).